Here is a 229-residue protein sequence, read N- to C-terminus: Large ribosomal subunit protein uL1 (229 aa).

Belongs to the universal ribosomal protein uL1 family. Part of the 50S ribosomal subunit.

Binds directly to 23S rRNA. The L1 stalk is quite mobile in the ribosome, and is involved in E site tRNA release. Functionally, protein L1 is also a translational repressor protein, it controls the translation of the L11 operon by binding to its mRNA. The protein is Large ribosomal subunit protein uL1 of Streptococcus gordonii (strain Challis / ATCC 35105 / BCRC 15272 / CH1 / DL1 / V288).